The following is a 428-amino-acid chain: tRNA modification GTPase MnmE (428 aa).

Arg-20, Glu-76, and Arg-116 together coordinate (6S)-5-formyl-5,6,7,8-tetrahydrofolate. In terms of domain architecture, TrmE-type G spans 212-351 (GFEVAIIGAP…LVEALQDRLL (140 aa)). Asn-222 provides a ligand contact to K(+). GTP-binding positions include 222-227 (NAGKST), 241-247 (SEVAGTT), and 266-269 (DTAG). Ser-226 provides a ligand contact to Mg(2+). Ser-241, Val-243, and Thr-246 together coordinate K(+). Thr-247 is a binding site for Mg(2+). Lys-428 provides a ligand contact to (6S)-5-formyl-5,6,7,8-tetrahydrofolate.

Belongs to the TRAFAC class TrmE-Era-EngA-EngB-Septin-like GTPase superfamily. TrmE GTPase family. As to quaternary structure, homodimer. Heterotetramer of two MnmE and two MnmG subunits. K(+) serves as cofactor.

It localises to the cytoplasm. Its function is as follows. Exhibits a very high intrinsic GTPase hydrolysis rate. Involved in the addition of a carboxymethylaminomethyl (cmnm) group at the wobble position (U34) of certain tRNAs, forming tRNA-cmnm(5)s(2)U34. This is tRNA modification GTPase MnmE from Cereibacter sphaeroides (strain ATCC 17025 / ATH 2.4.3) (Rhodobacter sphaeroides).